The chain runs to 75 residues: MSRICQITGKKRMIGNNRSHALNATKRKFLINIQYHRFWIADEKRFIKLRVSTNGMRYIDKKGIETVIRKINMKK.

The protein belongs to the bacterial ribosomal protein bL28 family.

In Buchnera aphidicola subsp. Acyrthosiphon pisum (strain 5A), this protein is Large ribosomal subunit protein bL28.